Reading from the N-terminus, the 681-residue chain is Sorting nexin-41 (681 aa).

Residues 1–12 (MSTDNLFEDIEQ) show a composition bias toward acidic residues. Residues 1-94 (MSTDNLFEDI…HNTSLNNGYP (94 aa)) are disordered. Over residues 13-24 (DNNPSFYGNPSI) the composition is skewed to polar residues. A PX domain is found at 113-236 (NDSQLQVDII…KFFDPNYELC (124 aa)). Positions 151, 153, 177, and 200 each coordinate a 1,2-diacyl-sn-glycero-3-phospho-(1D-myo-inositol-3-phosphate). Disordered regions lie at residues 475 to 505 (LASRISTDNDSNNSNNSGNNNNDGDLDTENF) and 558 to 597 (TATGSTEQQSQQQSAPNSPQREQQQQQSQSQSHHSHQTSI). Composition is skewed to low complexity over residues 482–497 (DNDSNNSNNSGNNNND) and 558–589 (TATGSTEQQSQQQSAPNSPQREQQQQQSQSQS).

Belongs to the sorting nexin family.

It localises to the endosome membrane. The protein localises to the endomembrane system. May be required for cytoplasm to vacuole transport (Cvt) and pexophagy. The protein is Sorting nexin-41 (SNX41) of Candida albicans (strain SC5314 / ATCC MYA-2876) (Yeast).